The following is a 279-amino-acid chain: GTP cyclohydrolase MptA (279 aa).

The protein belongs to the GTP cyclohydrolase IV family. In terms of assembly, homodimer. Fe(2+) is required as a cofactor.

The enzyme catalyses GTP + H2O = 7,8-dihydroneopterin 2',3'-cyclic phosphate + formate + diphosphate + H(+). It functions in the pathway cofactor biosynthesis; 5,6,7,8-tetrahydromethanopterin biosynthesis. In terms of biological role, converts GTP to 7,8-dihydro-D-neopterin 2',3'-cyclic phosphate, the first intermediate in the biosynthesis of coenzyme methanopterin. This Korarchaeum cryptofilum (strain OPF8) protein is GTP cyclohydrolase MptA.